Consider the following 72-residue polypeptide: Translation initiation factor IF-1 (72 aa).

The region spanning 1 to 72 (MSKEDVIEVE…TRGRITWRAK (72 aa)) is the S1-like domain.

The protein belongs to the IF-1 family. Component of the 30S ribosomal translation pre-initiation complex which assembles on the 30S ribosome in the order IF-2 and IF-3, IF-1 and N-formylmethionyl-tRNA(fMet); mRNA recruitment can occur at any time during PIC assembly.

It localises to the cytoplasm. Its function is as follows. One of the essential components for the initiation of protein synthesis. Stabilizes the binding of IF-2 and IF-3 on the 30S subunit to which N-formylmethionyl-tRNA(fMet) subsequently binds. Helps modulate mRNA selection, yielding the 30S pre-initiation complex (PIC). Upon addition of the 50S ribosomal subunit IF-1, IF-2 and IF-3 are released leaving the mature 70S translation initiation complex. The chain is Translation initiation factor IF-1 from Acetivibrio thermocellus (strain ATCC 27405 / DSM 1237 / JCM 9322 / NBRC 103400 / NCIMB 10682 / NRRL B-4536 / VPI 7372) (Clostridium thermocellum).